Reading from the N-terminus, the 227-residue chain is GRF-interacting factor 1 (227 aa).

A compositionally biased stretch (low complexity) spans alanine 124–alanine 139. Disordered regions lie at residues alanine 124–glutamate 160 and glycine 188–serine 227. Positions glutamate 217–serine 227 are enriched in basic and acidic residues.

It belongs to the SS18 family. As to quaternary structure, interacts with GRF4. In terms of tissue distribution, highly expressed in internodes, nodes, developing spikelets and developing anthers. Expressed at low levels in roots and mature glumes.

It is found in the nucleus. The protein resides in the cytoplasm. In terms of biological role, transcription coactivator that plays a role in the regulation of meristematic function in leaves, stems and inflorescences. May regulate leaf size, length of stem internodes, and seed size by promoting cell expansion. Transcription coactivator that plays a role in the regulation of grain size. Component of a network formed by the microRNA396 (miRNA396), the GRFs and their interacting factors (GIFs) acting in the regulation of meristem function, at least partially through the control of cell proliferation. Component of the miRNA396c-GRF4-GIF1 regulatory module that plays an important role in grain size determination. The chain is GRF-interacting factor 1 from Oryza sativa subsp. japonica (Rice).